We begin with the raw amino-acid sequence, 474 residues long: tRNA-2-methylthio-N(6)-dimethylallyladenosine synthase (474 aa).

The 118-residue stretch at 3–120 (KKLHIKTWGC…LPEMINSVRG (118 aa)) folds into the MTTase N-terminal domain. Residues Cys12, Cys49, Cys83, Cys157, Cys161, and Cys164 each contribute to the [4Fe-4S] cluster site. The region spanning 143-375 (RAEGPTAFVS…QERINQQAMA (233 aa)) is the Radical SAM core domain. A TRAM domain is found at 378–441 (RRMLGTTQRI…PNSLRGKVVR (64 aa)).

The protein belongs to the methylthiotransferase family. MiaB subfamily. As to quaternary structure, monomer. The cofactor is [4Fe-4S] cluster.

The protein resides in the cytoplasm. It carries out the reaction N(6)-dimethylallyladenosine(37) in tRNA + (sulfur carrier)-SH + AH2 + 2 S-adenosyl-L-methionine = 2-methylsulfanyl-N(6)-dimethylallyladenosine(37) in tRNA + (sulfur carrier)-H + 5'-deoxyadenosine + L-methionine + A + S-adenosyl-L-homocysteine + 2 H(+). In terms of biological role, catalyzes the methylthiolation of N6-(dimethylallyl)adenosine (i(6)A), leading to the formation of 2-methylthio-N6-(dimethylallyl)adenosine (ms(2)i(6)A) at position 37 in tRNAs that read codons beginning with uridine. This Escherichia coli (strain UTI89 / UPEC) protein is tRNA-2-methylthio-N(6)-dimethylallyladenosine synthase.